A 477-amino-acid polypeptide reads, in one-letter code: Proline--tRNA ligase (477 aa).

It belongs to the class-II aminoacyl-tRNA synthetase family. ProS type 3 subfamily. In terms of assembly, homodimer.

Its subcellular location is the cytoplasm. The catalysed reaction is tRNA(Pro) + L-proline + ATP = L-prolyl-tRNA(Pro) + AMP + diphosphate. Catalyzes the attachment of proline to tRNA(Pro) in a two-step reaction: proline is first activated by ATP to form Pro-AMP and then transferred to the acceptor end of tRNA(Pro). In Methanoculleus marisnigri (strain ATCC 35101 / DSM 1498 / JR1), this protein is Proline--tRNA ligase.